Consider the following 204-residue polypeptide: Phosphoprotein p30 (204 aa).

It belongs to the asfivirus phosphoprotein p30 family. Oligomer. Interacts with host HNRNPK. In terms of processing, phosphorylated on serine residues in the 115 N-terminal amino acids.

Its subcellular location is the host cytoplasm. The protein localises to the host nucleus. It is found in the virion. Functionally, modifies the subcellular distribution of heterogeneous nuclear ribonucleoprotein K (HNRNPK) and may contribute to modulate HNRNPK functions related to processing and export of mRNAs during ASFV infection. Necessary for virus internalization. In African swine fever virus (strain Badajoz 1971 Vero-adapted) (Ba71V), this protein is Phosphoprotein p30.